Here is a 294-residue protein sequence, read N- to C-terminus: MSNENKVLKLGLPKGSLQDSTIDLFAQAGFHFSVQSRSYFPSIDDDELEAILIRAQEMAHYVELGAFDVGLTGKDWIIETDADVVEVADLVYSKASMRPVRWVLCVPESSSIQSVKDLEGKHIATEVVNITKKYLAQHGVNASVEFSWGATEVKPPDLADAIVEVTETGTSLRANKLRIIDTLLESNTKLIANRQSWEDPWKREKIENMAMLLLGAINAHGKVGLKMNAPKASLEKLMSIIPALRQPTISALADAEWVALEVIVTEKIVRKLIPELKRAGAEGIFEYNINKLID.

Belongs to the ATP phosphoribosyltransferase family. Long subfamily. The cofactor is Mg(2+).

The protein localises to the cytoplasm. The catalysed reaction is 1-(5-phospho-beta-D-ribosyl)-ATP + diphosphate = 5-phospho-alpha-D-ribose 1-diphosphate + ATP. The protein operates within amino-acid biosynthesis; L-histidine biosynthesis; L-histidine from 5-phospho-alpha-D-ribose 1-diphosphate: step 1/9. With respect to regulation, feedback inhibited by histidine. In terms of biological role, catalyzes the condensation of ATP and 5-phosphoribose 1-diphosphate to form N'-(5'-phosphoribosyl)-ATP (PR-ATP). Has a crucial role in the pathway because the rate of histidine biosynthesis seems to be controlled primarily by regulation of HisG enzymatic activity. The protein is ATP phosphoribosyltransferase of Chlorobium chlorochromatii (strain CaD3).